Here is a 260-residue protein sequence, read N- to C-terminus: Acetylglutamate kinase (260 aa).

Substrate-binding positions include 46–47 (GG), R68, and N160.

Belongs to the acetylglutamate kinase family. ArgB subfamily.

It is found in the cytoplasm. The catalysed reaction is N-acetyl-L-glutamate + ATP = N-acetyl-L-glutamyl 5-phosphate + ADP. It participates in amino-acid biosynthesis; L-arginine biosynthesis; N(2)-acetyl-L-ornithine from L-glutamate: step 2/4. Its function is as follows. Catalyzes the ATP-dependent phosphorylation of N-acetyl-L-glutamate. The polypeptide is Acetylglutamate kinase (Shewanella sp. (strain MR-4)).